We begin with the raw amino-acid sequence, 701 residues long: MHATNWFDDWNPEALYRDDVTGCDDCSETSPIPKSGIICGPILRLINMDFKEKTYEGSIMVVVRGEENFPKITYQLGPSLPSEDEDIEVNEAFFEGKLFHKDILKDDNIWFYRYEIKLPMSNYEQMVKYAVDGTMEPHYRFFVPSFTQNSNVISYSCNGFSLSVDTSKFKGSLWYDVLKKHRYVHYHAILGGGDQIYSDNIKLHAPNLKAWLETKDPIKKYNTQTTEETKEQIRQFYLEHYLNWYGYGHWYGSTPKSKTTQKCFVKSLACIPAINVWDDHDIIDGYGSYNDSFMKTENFLTVGRMAYRYYMLFQQHVSASKQDGDEYAYLKSKQWILGNEKGSSYIGERSHSIFSWLGPKMAMLGLDCRTERKLHEIFSERSYSLIWERVEREIKNLKGGHLLLMLGIPIAYPRLVWLEWLFTSKLLAPIKYLSKKGIFASGFVNEFNGDVELLDDLNDHWCARHHKKERNYLIMKLQDIGAKYGVRITILSGDVHLASVGRFRAKIHRHHLIMSEEKEKENTRIIEEPTKDVRLIFNIIASAIVNTPPPDAMATLLQKRCRLHHFDLETDEDAVPIFAKEVDGVHKRKESCFMNKRNWSDIIPIENLLNNPQLSKELGVKVGDIVIPGIITEQQKLQKLENDDQINSYPVTSGGLFTTIHVERDANQTNSQTVSYCLPIPELTVTCERLSHKGIKHLNIT.

This is an uncharacterized protein from Saccharomyces cerevisiae (strain ATCC 204508 / S288c) (Baker's yeast).